The sequence spans 579 residues: CTP synthase (579 aa).

An amidoligase domain region spans residues Met1–Leu281. Ser23 provides a ligand contact to CTP. Ser23 contributes to the UTP binding site. Residues Ser24 to Leu29 and Asp81 each bind ATP. Asp81 and Glu155 together coordinate Mg(2+). CTP is bound by residues Asp162 to Glu164, Lys202 to Gln207, and Lys238. UTP-binding positions include Lys202–Gln207 and Lys238. Positions Arg306 to Ala554 constitute a Glutamine amidotransferase type-1 domain. Gly369 is an L-glutamine binding site. Residue Cys396 is the Nucleophile; for glutamine hydrolysis of the active site. L-glutamine contacts are provided by residues Leu397–Gln400, Glu419, and Arg480. Active-site residues include His527 and Glu529.

It belongs to the CTP synthase family. In terms of assembly, homotetramer.

It carries out the reaction UTP + L-glutamine + ATP + H2O = CTP + L-glutamate + ADP + phosphate + 2 H(+). The enzyme catalyses L-glutamine + H2O = L-glutamate + NH4(+). The catalysed reaction is UTP + NH4(+) + ATP = CTP + ADP + phosphate + 2 H(+). It functions in the pathway pyrimidine metabolism; CTP biosynthesis via de novo pathway; CTP from UDP: step 2/2. Its activity is regulated as follows. Allosterically activated by GTP, when glutamine is the substrate; GTP has no effect on the reaction when ammonia is the substrate. The allosteric effector GTP functions by stabilizing the protein conformation that binds the tetrahedral intermediate(s) formed during glutamine hydrolysis. Inhibited by the product CTP, via allosteric rather than competitive inhibition. Catalyzes the ATP-dependent amination of UTP to CTP with either L-glutamine or ammonia as the source of nitrogen. Regulates intracellular CTP levels through interactions with the four ribonucleotide triphosphates. The protein is CTP synthase of Mycobacterium sp. (strain JLS).